The primary structure comprises 432 residues: Phosphomethylpyrimidine synthase (432 aa).

Substrate contacts are provided by residues asparagine 66, methionine 95, tyrosine 124, histidine 163, 185 to 187, 226 to 229, and glutamate 265; these read SRG and DGLR. Zn(2+) is bound at residue histidine 269. Residue tyrosine 292 participates in substrate binding. Residue histidine 333 participates in Zn(2+) binding. Residues cysteine 409, cysteine 412, and cysteine 416 each contribute to the [4Fe-4S] cluster site.

This sequence belongs to the ThiC family. It depends on [4Fe-4S] cluster as a cofactor.

The enzyme catalyses 5-amino-1-(5-phospho-beta-D-ribosyl)imidazole + S-adenosyl-L-methionine = 4-amino-2-methyl-5-(phosphooxymethyl)pyrimidine + CO + 5'-deoxyadenosine + formate + L-methionine + 3 H(+). The protein operates within cofactor biosynthesis; thiamine diphosphate biosynthesis. In terms of biological role, catalyzes the synthesis of the hydroxymethylpyrimidine phosphate (HMP-P) moiety of thiamine from aminoimidazole ribotide (AIR) in a radical S-adenosyl-L-methionine (SAM)-dependent reaction. The polypeptide is Phosphomethylpyrimidine synthase (Desulfitobacterium hafniense (strain DSM 10664 / DCB-2)).